The following is a 405-amino-acid chain: Multidrug resistance protein MdtA (405 aa).

The first 22 residues, Met1–Ala22, serve as a signal peptide directing secretion. A compositionally biased stretch (polar residues) spans Val35–Ser52. The segment at Val35 to Val62 is disordered.

The protein belongs to the membrane fusion protein (MFP) (TC 8.A.1) family. Part of a tripartite efflux system composed of MdtA, MdtB and MdtC.

It localises to the cell inner membrane. The protein is Multidrug resistance protein MdtA of Erwinia amylovora (strain ATCC 49946 / CCPPB 0273 / Ea273 / 27-3).